Reading from the N-terminus, the 594-residue chain is Glutamate decarboxylase 1 (594 aa).

Positions 1 to 13 (MASSTPSSSATSS) are enriched in low complexity. The segment at 1–23 (MASSTPSSSATSSNAGADPNTTN) is disordered. Phosphoserine is present on serine 78. Residue 190-192 (QLS) participates in 4-aminobutanoate binding. Lysine 405 carries the post-translational modification N6-(pyridoxal phosphate)lysine. Position 567 (arginine 567) interacts with 4-aminobutanoate.

This sequence belongs to the group II decarboxylase family. As to quaternary structure, homodimer. Requires pyridoxal 5'-phosphate as cofactor.

It carries out the reaction L-glutamate + H(+) = 4-aminobutanoate + CO2. In terms of biological role, catalyzes the synthesis of the inhibitory neurotransmitter gamma-aminobutyric acid (GABA) with pyridoxal 5'-phosphate as cofactor. The polypeptide is Glutamate decarboxylase 1 (GAD1) (Pongo abelii (Sumatran orangutan)).